The chain runs to 217 residues: MAARCVRLARRSLPALALSFRPSPRLLCTATKQKNNGQNLDEDLGHCEPKTDPPSADKTLLEEKAKLEEQLRETMEKYKRALADTENLRQRSQKLVEEAKLYGIQGFCKDLLEVADILEKATQSVPKEEISNNNPHLKSLYEGLVMTEVQIQKVFTKHGLLRLDPIGAKFDPYEHEALFHTPVEGKEPGTVALVSKVGYKLHGRTLRPALVGVVKDA.

A mitochondrion-targeting transit peptide spans 1 to 27 (MAARCVRLARRSLPALALSFRPSPRLL). The tract at residues 37-56 (GQNLDEDLGHCEPKTDPPSA) is disordered. An N6-acetyllysine; alternate modification is found at K94. K94 is subject to N6-succinyllysine; alternate. K100 is modified (N6-acetyllysine). K120 is modified (N6-succinyllysine). K215 is subject to N6-acetyllysine; alternate. Position 215 is an N6-succinyllysine; alternate (K215).

It belongs to the GrpE family. As to quaternary structure, probable component of the PAM complex at least composed of a mitochondrial HSP70 protein, GRPEL1 or GRPEL2, TIMM44, TIMM16/PAM16 and TIMM14/DNAJC19. Binds to HSP70, HSC70 and HSJ1B.

It is found in the mitochondrion matrix. Functionally, essential component of the PAM complex, a complex required for the translocation of transit peptide-containing proteins from the inner membrane into the mitochondrial matrix in an ATP-dependent manner. Seems to control the nucleotide-dependent binding of mitochondrial HSP70 to substrate proteins. In Mus musculus (Mouse), this protein is GrpE protein homolog 1, mitochondrial (Grpel1).